The primary structure comprises 233 residues: Orotidine 5'-phosphate decarboxylase (233 aa).

Substrate-binding positions include D11, K34, 61 to 70 (DLKLHDIPNT), T117, R179, Q189, G209, and R210. The active-site Proton donor is K63.

Belongs to the OMP decarboxylase family. Type 1 subfamily. As to quaternary structure, homodimer.

It carries out the reaction orotidine 5'-phosphate + H(+) = UMP + CO2. The protein operates within pyrimidine metabolism; UMP biosynthesis via de novo pathway; UMP from orotate: step 2/2. In terms of biological role, catalyzes the decarboxylation of orotidine 5'-monophosphate (OMP) to uridine 5'-monophosphate (UMP). The chain is Orotidine 5'-phosphate decarboxylase from Streptococcus agalactiae serotype III (strain NEM316).